The sequence spans 562 residues: Formate--tetrahydrofolate ligase (562 aa).

71 to 78 is an ATP binding site; that stretch reads TPAGEGKS.

It belongs to the formate--tetrahydrofolate ligase family.

The enzyme catalyses (6S)-5,6,7,8-tetrahydrofolate + formate + ATP = (6R)-10-formyltetrahydrofolate + ADP + phosphate. The protein operates within one-carbon metabolism; tetrahydrofolate interconversion. The protein is Formate--tetrahydrofolate ligase of Bacillus cereus (strain AH187).